The chain runs to 224 residues: Myogenin (224 aa).

Residues Ser77 and Ser79 each carry the phosphoserine; by CaMK2G modification. The 52-residue stretch at 81-132 (DRRRAATLREKRRLKKVNEAFEALKRSTLLNPNQRLPKVEILRSAIQYIERL) folds into the bHLH domain. A Phosphothreonine; by CaMK2G modification is found at Thr87.

In terms of assembly, homodimer and heterodimer with E12; heterodimerization enhances MYOG DNA-binding and transcriptional activities. Interacts with SMARCA4/BRG1/BAF190A. Interacts (via C-terminal region) with SSRP1 and SUPT16H; the interaction is indicative of an interaction with the FACT complex. Interacts with CSRP3. Post-translationally, phosphorylated by CAMK2G on threonine and serine amino acids in a muscle activity-dependent manner. Phosphorylation of Thr-87 impairs both DNA-binding and trans-activation functions in contracting muscles.

It localises to the nucleus. In terms of biological role, acts as a transcriptional activator that promotes transcription of muscle-specific target genes and plays a role in muscle differentiation, cell cycle exit and muscle atrophy. Essential for the development of functional embryonic skeletal fiber muscle differentiation. However is dispensable for postnatal skeletal muscle growth; phosphorylation by CAMK2G inhibits its transcriptional activity in respons to muscle activity. Required for the recruitment of the FACT complex to muscle-specific promoter regions, thus promoting gene expression initiation. During terminal myoblast differentiation, plays a role as a strong activator of transcription at loci with an open chromatin structure previously initiated by MYOD1. Together with MYF5 and MYOD1, co-occupies muscle-specific gene promoter core regions during myogenesis. Also cooperates with myocyte-specific enhancer factor MEF2D and BRG1-dependent recruitment of SWI/SNF chromatin-remodeling enzymes to alter chromatin structure at myogenic late gene promoters. Facilitates cell cycle exit during terminal muscle differentiation through the up-regulation of miR-20a expression, which in turn represses genes involved in cell cycle progression. Binds to the E-box containing (E1) promoter region of the miR-20a gene. Also plays a role in preventing reversal of muscle cell differentiation. Contributes to the atrophy-related gene expression in adult denervated muscles. Induces fibroblasts to differentiate into myoblasts. This chain is Myogenin (MYOG), found in Bos taurus (Bovine).